Reading from the N-terminus, the 599-residue chain is uncharacterized protein (599 aa).

This is an uncharacterized protein from Acanthamoeba polyphaga (Amoeba).